A 701-amino-acid polypeptide reads, in one-letter code: Polyribonucleotide nucleotidyltransferase (701 aa).

2 residues coordinate Mg(2+): Asp-490 and Asp-496. The KH domain occupies 557–616 (PKVVTMSINPDKIRDVIGPGGKKINEIIDETGVKLDIEQDGTIFIGAVDQAMINRAKEII). Residues 626–694 (GQVYHAKVKR…KQGRVNASHK (69 aa)) enclose the S1 motif domain.

This sequence belongs to the polyribonucleotide nucleotidyltransferase family. Mg(2+) is required as a cofactor.

The protein localises to the cytoplasm. It catalyses the reaction RNA(n+1) + phosphate = RNA(n) + a ribonucleoside 5'-diphosphate. Involved in mRNA degradation. Catalyzes the phosphorolysis of single-stranded polyribonucleotides processively in the 3'- to 5'-direction. In Staphylococcus epidermidis (strain ATCC 12228 / FDA PCI 1200), this protein is Polyribonucleotide nucleotidyltransferase.